The chain runs to 102 residues: Protein 108 (102 aa).

Positions Met1 to Ser30 are cleaved as a signal peptide. Disulfide bonds link Cys41–Cys77, Cys51–Cys66, Cys67–Cys92, and Cys79–Cys99.

It belongs to the A9/FIL1 family. In terms of tissue distribution, stamen- and tapetum-specific.

The protein localises to the secreted. The polypeptide is Protein 108 (Solanum lycopersicum (Tomato)).